A 464-amino-acid chain; its full sequence is Cysteine--tRNA ligase 1 (464 aa).

A Zn(2+)-binding site is contributed by Cys-28. A 'HIGH' region motif is present at residues 30–40 (VTIYDLCHIGH). Positions 209, 234, and 238 each coordinate Zn(2+). The 'KMSKS' region signature appears at 266–270 (KMSKS). Lys-269 contacts ATP.

Belongs to the class-I aminoacyl-tRNA synthetase family. Monomer. Requires Zn(2+) as cofactor.

The protein localises to the cytoplasm. The enzyme catalyses tRNA(Cys) + L-cysteine + ATP = L-cysteinyl-tRNA(Cys) + AMP + diphosphate. The polypeptide is Cysteine--tRNA ligase 1 (Photobacterium profundum (strain SS9)).